A 246-amino-acid polypeptide reads, in one-letter code: UDP-N-acetyl-D-mannosaminuronic acid transferase (246 aa).

This sequence belongs to the glycosyltransferase 26 family.

The enzyme catalyses UDP-N-acetyl-alpha-D-mannosaminouronate + N-acetyl-alpha-D-glucosaminyl-di-trans,octa-cis-undecaprenyl diphosphate = beta-D-ManNAcA-(1-&gt;4)-alpha-D-GlcNAc-di-trans,octa-cis-undecaprenyl diphosphate + UDP + H(+). It participates in bacterial outer membrane biogenesis; enterobacterial common antigen biosynthesis. Catalyzes the synthesis of Und-PP-GlcNAc-ManNAcA (Lipid II), the second lipid-linked intermediate involved in enterobacterial common antigen (ECA) synthesis. In Escherichia coli O157:H7, this protein is UDP-N-acetyl-D-mannosaminuronic acid transferase.